The primary structure comprises 626 residues: Bifurcating [FeFe] hydrogenase beta subunit (626 aa).

198-201 contributes to the NAD(+) binding site; the sequence is GGGG. FMN is bound by residues lysine 207 and 224 to 228; that span reads NGDEG. Position 229 (aspartate 229) interacts with NAD(+). FMN-binding positions include 312-317 and 350-352; these read FVCGEE and INN. [4Fe-4S] cluster is bound by residues cysteine 485, cysteine 488, cysteine 491, cysteine 531, cysteine 578, cysteine 581, cysteine 584, cysteine 588, cysteine 608, cysteine 611, cysteine 614, and cysteine 618. 2 consecutive 4Fe-4S ferredoxin-type domains span residues 569–598 and 599–626; these read KKYV…GERG and KPYT…IELV.

Belongs to the complex I 51 kDa subunit family. Heterotrimer composed of HydA (alpha subunit), HydB (beta subunit) and HydC (gamma subunit). Near neutral and acidic pH conditions favor oligomerization of the heterotrimeric holoenzyme. Requires [2Fe-2S] cluster as cofactor. It depends on [4Fe-4S] cluster as a cofactor. FMN is required as a cofactor.

It localises to the cytoplasm. It carries out the reaction 2 H2 + 2 oxidized [2Fe-2S]-[ferredoxin] + NAD(+) = 2 reduced [2Fe-2S]-[ferredoxin] + NADH + 3 H(+). In terms of biological role, catalyzes the oxidation of the physiological electron carriers NADH and reduced ferredoxin, coupled to the production of H(2). Acts as a bifurcating [FeFe] hydrogenase, which uses the exergonic oxidation of reduced ferredoxin to drive the unfavorable oxidation of NADH to produce H(2). The beta subunit contains flavin- and NAD-binding sites and is potentially the site for NADH oxidation, with the subsequent shuttling of electrons to the alpha subunit. In Thermotoga maritima (strain ATCC 43589 / DSM 3109 / JCM 10099 / NBRC 100826 / MSB8), this protein is Bifurcating [FeFe] hydrogenase beta subunit.